Here is a 535-residue protein sequence, read N- to C-terminus: 5,6-dihydroxyindole-2-carboxylic acid oxidase (535 aa).

The signal sequence occupies residues 1 to 23; sequence MQLPMLLLVSLPLLLNMFKPAEA. Residues 24 to 478 lie on the Lumenal, melanosome side of the membrane; the sequence is QFPRQCATIE…GPLRVTEMIT (455 aa). Cystine bridges form between C29–C40, C41–C64, C55–C98, C100–C109, and C112–C121. N-linked (GlcNAc...) asparagine glycosylation is found at N95 and N103. N180 carries an N-linked (GlcNAc...) asparagine glycan. Positions 191, 214, and 223 each coordinate Zn(2+). 2 cysteine pairs are disulfide-bonded: C257–C260 and C289–C302. N-linked (GlcNAc...) asparagine glycosylation is found at N303 and N349. Zn(2+) contacts are provided by H376 and H380. N-linked (GlcNAc...) asparagine glycosylation is present at N384. H403 contributes to the Zn(2+) binding site. Residues 479-499 form a helical membrane-spanning segment; sequence IAIVTALVLVAIIFAAAACIV. The Cytoplasmic segment spans residues 500-535; the sequence is RAKKNRDELHQPLLTDQYQHYSDDYDGIATPSQSVV.

This sequence belongs to the tyrosinase family. In terms of assembly, tyrosinase, TYRP1 and TYRP2 may form a multienzyme complex. It depends on Cu(2+) as a cofactor. The cofactor is Zn(2+).

It localises to the melanosome membrane. The catalysed reaction is 2 5,6-dihydroxyindole-2-carboxylate + O2 = 2 indole-5,6-quinone-2-carboxylate + 2 H2O. The protein operates within pigment biosynthesis; melanin biosynthesis. Functionally, plays a role in melanin biosynthesis. Catalyzes the oxidation of 5,6-dihydroxyindole-2-carboxylic acid (DHICA) into indole-5,6-quinone-2-carboxylic acid. May regulate or influence the type of melanin synthesized. Also to a lower extent, capable of hydroxylating tyrosine and producing melanin. The chain is 5,6-dihydroxyindole-2-carboxylic acid oxidase (TYRP1) from Gallus gallus (Chicken).